Consider the following 310-residue polypeptide: Tagatose-6-phosphate kinase (310 aa).

It belongs to the carbohydrate kinase PfkB family. LacC subfamily.

The catalysed reaction is D-tagatofuranose 6-phosphate + ATP = D-tagatofuranose 1,6-bisphosphate + ADP + H(+). The protein operates within carbohydrate metabolism; D-tagatose 6-phosphate degradation; D-glyceraldehyde 3-phosphate and glycerone phosphate from D-tagatose 6-phosphate: step 1/2. In Lactococcus lactis subsp. lactis (Streptococcus lactis), this protein is Tagatose-6-phosphate kinase.